Here is a 113-residue protein sequence, read N- to C-terminus: Putative gene 57 protein (113 aa).

The protein is Putative gene 57 protein (57) of Bacillus phage SP01 (Bacteriophage SP01).